The primary structure comprises 276 residues: NH(3)-dependent NAD(+) synthetase (276 aa).

43 to 50 lines the ATP pocket; sequence GISGGVDS. Mg(2+) is bound at residue aspartate 49. Position 146 (arginine 146) interacts with deamido-NAD(+). Threonine 166 is a binding site for ATP. Residue glutamate 171 coordinates Mg(2+). Deamido-NAD(+)-binding residues include lysine 179 and aspartate 186. ATP-binding residues include lysine 195 and threonine 217. 266 to 267 is a binding site for deamido-NAD(+); the sequence is HK.

This sequence belongs to the NAD synthetase family. In terms of assembly, homodimer.

It carries out the reaction deamido-NAD(+) + NH4(+) + ATP = AMP + diphosphate + NAD(+) + H(+). It functions in the pathway cofactor biosynthesis; NAD(+) biosynthesis; NAD(+) from deamido-NAD(+) (ammonia route): step 1/1. Its function is as follows. Catalyzes the ATP-dependent amidation of deamido-NAD to form NAD. Uses ammonia as a nitrogen source. In Shewanella putrefaciens (strain CN-32 / ATCC BAA-453), this protein is NH(3)-dependent NAD(+) synthetase.